Here is a 374-residue protein sequence, read N- to C-terminus: Isocitrate dehydrogenase [NAD] catalytic subunit 6, mitochondrial (374 aa).

A mitochondrion-targeting transit peptide spans 1 to 44 (MTMTAFLARRLIGNGSSQILGTSSSSSGPFISVSRAFFSSSTPI). Substrate contacts are provided by R127, R137, R158, and D245. Mg(2+) is bound by residues D245, D269, and D273.

It belongs to the isocitrate and isopropylmalate dehydrogenases family. Heterooligomer of catalytic and regulatory subunits. Requires Mg(2+) as cofactor. Mn(2+) is required as a cofactor. Ubiquitous. Predominantly expressed in leaves.

It localises to the mitochondrion. The catalysed reaction is D-threo-isocitrate + NAD(+) = 2-oxoglutarate + CO2 + NADH. Its function is as follows. Catalytic subunit of the NAD(+)-dependent isocitrate dehydrogenase involved in the oxidative decarboxylation of isocitrate to 2-oxoglutarate. Performs an essential role in the oxidative function of the citric acid cycle. In Arabidopsis thaliana (Mouse-ear cress), this protein is Isocitrate dehydrogenase [NAD] catalytic subunit 6, mitochondrial (IDH6).